The chain runs to 77 residues: Putative defensin-like protein 129 (77 aa).

The N-terminal stretch at 1–25 (MTKNTALTIFMVVLVIEMVMEETQG) is a signal peptide. Disulfide bonds link cysteine 28–cysteine 77, cysteine 37–cysteine 59, cysteine 42–cysteine 71, and cysteine 46–cysteine 73.

It belongs to the DEFL family.

It is found in the secreted. The chain is Putative defensin-like protein 129 (LCR13) from Arabidopsis thaliana (Mouse-ear cress).